We begin with the raw amino-acid sequence, 237 residues long: Ribosomal RNA small subunit methyltransferase G (237 aa).

S-adenosyl-L-methionine is bound by residues Gly-78, Phe-83, 129-130 (AE), and Arg-148. The segment at 218-237 (KKETPNKYPRKAGMPNKRPL) is disordered.

The protein belongs to the methyltransferase superfamily. RNA methyltransferase RsmG family.

It localises to the cytoplasm. Specifically methylates the N7 position of a guanine in 16S rRNA. The sequence is that of Ribosomal RNA small subunit methyltransferase G from Streptococcus sanguinis (strain SK36).